The following is a 1415-amino-acid chain: G8 domain-containing protein DDB_G0278975 (1415 aa).

Residues 1-24 form the signal peptide; the sequence is MKINKIILFFFLSCLYLFSSSVSA. Helical transmembrane passes span 107-127 and 138-158; these read INLNSLILISFSTIITFGLFT and LLFIVLLICISIFNLSNSIKI. N-linked (GlcNAc...) asparagine glycosylation is found at N245, N366, N428, N466, and N579. A G8 domain is found at 566 to 692; sequence STWPNGIIPS…YHNTWSKLSA (127 aa). 2 PbH1 repeats span residues 819–841 and 842–864; these read LKNSYISDCSVTNSYYRCYTIHG and TNNVTLTRNVAFDVSGHCYYLED. 7 N-linked (GlcNAc...) asparagine glycosylation sites follow: N844, N985, N1009, N1023, N1099, N1244, and N1342.

It belongs to the comF family.

The protein localises to the membrane. The sequence is that of G8 domain-containing protein DDB_G0278975 from Dictyostelium discoideum (Social amoeba).